The sequence spans 75 residues: Mating pheromone Er-10 (75 aa).

A signal peptide spans 1 to 19 (MNKLAILAIIAMVLFSANA). A propeptide spanning residues 20 to 37 (FRFQSRIRSNVEAKTETR) is cleaved from the precursor. 3 cysteine pairs are disulfide-bonded: C40–C56, C47–C74, and C52–C64.

Homodimer.

The protein resides in the secreted. Its function is as follows. Mating ciliate pheromones (or gamones) are diffusible extracellular communication signals that distinguish different intraspecific classes of cells commonly referred to as 'mating types'. They prepare the latter for conjugation by changing their cell surface properties. This Euplotes raikovi protein is Mating pheromone Er-10 (MAT10).